Consider the following 87-residue polypeptide: Long neurotoxin homolog (87 aa).

The N-terminal stretch at 1-21 (MKTLLLTLVVVTIVCLDLGYT) is a signal peptide. Intrachain disulfides connect cysteine 24/cysteine 47, cysteine 27/cysteine 32, cysteine 40/cysteine 64, cysteine 68/cysteine 80, and cysteine 81/cysteine 86.

As to expression, expressed by the venom gland.

The protein resides in the secreted. Inhibits carbachol-induced muscle contraction in a reversible manner. This is Long neurotoxin homolog from Bungarus multicinctus (Many-banded krait).